The chain runs to 657 residues: Methionine--tRNA ligase (657 aa).

The 'HIGH' region motif lies at Tyr-13–His-23. The 'KMSKS' region motif lies at Lys-308–Ser-312. An ATP-binding site is contributed by Lys-311. Residues Asp-557–Lys-657 form the tRNA-binding domain.

This sequence belongs to the class-I aminoacyl-tRNA synthetase family. MetG type 2B subfamily. As to quaternary structure, homodimer.

It localises to the cytoplasm. It catalyses the reaction tRNA(Met) + L-methionine + ATP = L-methionyl-tRNA(Met) + AMP + diphosphate. In terms of biological role, is required not only for elongation of protein synthesis but also for the initiation of all mRNA translation through initiator tRNA(fMet) aminoacylation. In Staphylococcus aureus (strain Mu50 / ATCC 700699), this protein is Methionine--tRNA ligase.